We begin with the raw amino-acid sequence, 607 residues long: Isocitrate dehydrogenase kinase/phosphatase (607 aa).

Residues 328 to 334 (APGIKGL) and lysine 349 contribute to the ATP site. Residue aspartate 384 is part of the active site.

This sequence belongs to the AceK family.

The protein localises to the cytoplasm. It carries out the reaction L-seryl-[isocitrate dehydrogenase] + ATP = O-phospho-L-seryl-[isocitrate dehydrogenase] + ADP + H(+). Its function is as follows. Bifunctional enzyme which can phosphorylate or dephosphorylate isocitrate dehydrogenase (IDH) on a specific serine residue. This is a regulatory mechanism which enables bacteria to bypass the Krebs cycle via the glyoxylate shunt in response to the source of carbon. When bacteria are grown on glucose, IDH is fully active and unphosphorylated, but when grown on acetate or ethanol, the activity of IDH declines drastically concomitant with its phosphorylation. The polypeptide is Isocitrate dehydrogenase kinase/phosphatase (Cupriavidus metallidurans (strain ATCC 43123 / DSM 2839 / NBRC 102507 / CH34) (Ralstonia metallidurans)).